Here is a 96-residue protein sequence, read N- to C-terminus: Translation initiation factor 1A 1 (96 aa).

Positions 8–82 (GSHDLRMPDD…EKGDITWRYE (75 aa)) constitute an S1-like domain.

It belongs to the eIF-1A family.

In terms of biological role, seems to be required for maximal rate of protein biosynthesis. Enhances ribosome dissociation into subunits and stabilizes the binding of the initiator Met-tRNA(I) to 40 S ribosomal subunits. The chain is Translation initiation factor 1A 1 from Haloquadratum walsbyi (strain DSM 16790 / HBSQ001).